The chain runs to 423 residues: Putative competence-damage inducible protein (423 aa).

The protein belongs to the CinA family.

This chain is Putative competence-damage inducible protein, found in Streptococcus pyogenes serotype M1.